The sequence spans 761 residues: Phosphoribosylformylglycinamidine synthase subunit PurL (761 aa).

The span at 1–16 shows a compositional bias: low complexity; it reads MTGNPAAPAATSVSPP. A disordered region spans residues 1–21; sequence MTGNPAAPAATSVSPPAEQPY. The active site involves His-57. The ATP site is built by Tyr-60 and Lys-101. Residue Glu-103 participates in Mg(2+) binding. Substrate-binding positions include 104–107 and Arg-126; that span reads SHNH. The active-site Proton acceptor is His-105. Asp-127 provides a ligand contact to Mg(2+). Position 252 (Gln-252) interacts with substrate. Asp-280 contacts Mg(2+). 329 to 331 provides a ligand contact to substrate; that stretch reads ESQ. Residues Asn-519 and Gly-556 each contribute to the ATP site. Mg(2+) is bound at residue Asn-557. Ser-559 is a binding site for substrate.

It belongs to the FGAMS family. Monomer. Part of the FGAM synthase complex composed of 1 PurL, 1 PurQ and 2 PurS subunits.

The protein resides in the cytoplasm. It catalyses the reaction N(2)-formyl-N(1)-(5-phospho-beta-D-ribosyl)glycinamide + L-glutamine + ATP + H2O = 2-formamido-N(1)-(5-O-phospho-beta-D-ribosyl)acetamidine + L-glutamate + ADP + phosphate + H(+). Its pathway is purine metabolism; IMP biosynthesis via de novo pathway; 5-amino-1-(5-phospho-D-ribosyl)imidazole from N(2)-formyl-N(1)-(5-phospho-D-ribosyl)glycinamide: step 1/2. Part of the phosphoribosylformylglycinamidine synthase complex involved in the purines biosynthetic pathway. Catalyzes the ATP-dependent conversion of formylglycinamide ribonucleotide (FGAR) and glutamine to yield formylglycinamidine ribonucleotide (FGAM) and glutamate. The FGAM synthase complex is composed of three subunits. PurQ produces an ammonia molecule by converting glutamine to glutamate. PurL transfers the ammonia molecule to FGAR to form FGAM in an ATP-dependent manner. PurS interacts with PurQ and PurL and is thought to assist in the transfer of the ammonia molecule from PurQ to PurL. This is Phosphoribosylformylglycinamidine synthase subunit PurL from Frankia casuarinae (strain DSM 45818 / CECT 9043 / HFP020203 / CcI3).